A 726-amino-acid chain; its full sequence is Elongation factor 2 (726 aa).

In terms of domain architecture, tr-type G spans 19–260 (DRIRNIGICA…MVIKHLPSPP (242 aa)). Residues 28–35 (AHIDHGKT), 94–98 (DTPGH), and 148–151 (NKVD) each bind GTP. Position 602 is a diphthamide (His602).

This sequence belongs to the TRAFAC class translation factor GTPase superfamily. Classic translation factor GTPase family. EF-G/EF-2 subfamily.

It is found in the cytoplasm. Functionally, catalyzes the GTP-dependent ribosomal translocation step during translation elongation. During this step, the ribosome changes from the pre-translocational (PRE) to the post-translocational (POST) state as the newly formed A-site-bound peptidyl-tRNA and P-site-bound deacylated tRNA move to the P and E sites, respectively. Catalyzes the coordinated movement of the two tRNA molecules, the mRNA and conformational changes in the ribosome. The chain is Elongation factor 2 (fusA) from Methanocaldococcus jannaschii (strain ATCC 43067 / DSM 2661 / JAL-1 / JCM 10045 / NBRC 100440) (Methanococcus jannaschii).